A 288-amino-acid polypeptide reads, in one-letter code: Ankyrin repeat and SOCS box protein 8 (288 aa).

Serine 17 carries the post-translational modification Phosphoserine. ANK repeat units lie at residues 52 to 81, 85 to 113, 117 to 146, and 150 to 179; these read GTLK…EVNA, YNRT…NPNA, NRDT…SVNA, and NNDT…EVRV. Residues 235–288 form the SOCS box domain; the sequence is QLCEKLTVLCSAPGTLKTLARYAVRRSLGLQYLPDAVKGLPLPASLKEYLLLLE.

It belongs to the ankyrin SOCS box (ASB) family. In terms of assembly, interacts with TBK1; this interaction promotes TBK1 proteasomal degradation. Phosphorylated by TBK1.

The protein resides in the cytoplasm. Its pathway is protein modification; protein ubiquitination. Its function is as follows. May be a substrate-recognition component of a SCF-like ECS (Elongin-Cullin-SOCS-box protein) E3 ubiquitin-protein ligase complex which mediates the ubiquitination and subsequent proteasomal degradation of target proteins. Inhibits IFN-beta production through the IRF3 signaling pathway by targeting TBK1 via 'Lys-48'-linked ubiquitination, leading to its proteasomal degradation. The polypeptide is Ankyrin repeat and SOCS box protein 8 (ASB8) (Macaca fascicularis (Crab-eating macaque)).